We begin with the raw amino-acid sequence, 1132 residues long: SNF2 domain-containing protein CLASSY 4 (1132 aa).

Disordered regions lie at residues N24 to F104, L224 to K331, D376 to R396, and P525 to R544. The short motif at K47 to D54 is the Nuclear localization signal element. Residues E81–E90 are compositionally biased toward basic and acidic residues. Polar residues predominate over residues V92–S103. Positions S233–S242 are enriched in low complexity. The segment covering S243–G254 has biased composition (acidic residues). Residues T255–G269 are compositionally biased toward basic and acidic residues. 2 stretches are compositionally biased toward acidic residues: residues E270 to S282 and D291 to E309. Composition is skewed to basic and acidic residues over residues G310 to V326, D376 to K392, and P525 to D539. Positions S603–A796 constitute a Helicase ATP-binding domain. Residue H616 to T623 coordinates ATP. The DEAH box motif lies at D747–H750. Residues D934–K1087 enclose the Helicase C-terminal domain.

Belongs to the SNF2/RAD54 helicase family. In terms of assembly, interacts with NRPD1.

The protein localises to the nucleus. In terms of biological role, probable chromatin remodeling factor. This chain is SNF2 domain-containing protein CLASSY 4 (CLSY4), found in Arabidopsis thaliana (Mouse-ear cress).